Reading from the N-terminus, the 73-residue chain is Beta-defensin 39 (73 aa).

A signal peptide spans 1–23; it reads MKISCFLLLVLSLSCFQINSVSG. Intrachain disulfides connect cysteine 29-cysteine 58, cysteine 36-cysteine 51, and cysteine 41-cysteine 59.

The protein belongs to the beta-defensin family.

The protein localises to the secreted. Has antibacterial activity. In Rattus norvegicus (Rat), this protein is Beta-defensin 39 (Defb39).